The following is a 223-amino-acid chain: dITP/XTP pyrophosphatase (223 aa).

Thr9 to Lys14 provides a ligand contact to substrate. The active-site Proton acceptor is Asp71. Position 71 (Asp71) interacts with Mg(2+). Substrate is bound by residues Ser72, Phe152–Asp155, Lys175, and His180–Arg181. Residues Leu203 to Lys223 form a disordered region.

Belongs to the HAM1 NTPase family. As to quaternary structure, homodimer. Mg(2+) serves as cofactor.

It catalyses the reaction XTP + H2O = XMP + diphosphate + H(+). The catalysed reaction is dITP + H2O = dIMP + diphosphate + H(+). The enzyme catalyses ITP + H2O = IMP + diphosphate + H(+). Functionally, pyrophosphatase that catalyzes the hydrolysis of nucleoside triphosphates to their monophosphate derivatives, with a high preference for the non-canonical purine nucleotides XTP (xanthosine triphosphate), dITP (deoxyinosine triphosphate) and ITP. Seems to function as a house-cleaning enzyme that removes non-canonical purine nucleotides from the nucleotide pool, thus preventing their incorporation into DNA/RNA and avoiding chromosomal lesions. The chain is dITP/XTP pyrophosphatase from Desulfotalea psychrophila (strain LSv54 / DSM 12343).